Reading from the N-terminus, the 4691-residue chain is Plectin (4691 aa).

Residues 1-1478 (MVAGMLMPLD…SELTTLTSQY (1478 aa)) form a globular 1 region. Phosphoserine is present on Arg-21. At Val-26 the chain carries Phosphotyrosine. 2 disordered regions span residues 113–161 (RSPH…TPVV) and 167–186 (GTLARPGPEPAPATDERDRV). The span at 137–154 (DPAREERQVYRRKEREEG) shows a compositional bias: basic and acidic residues. The interval 181–411 (DERDRVQKKT…YVSSLYDAMP (231 aa)) is actin-binding. Calponin-homology (CH) domains are found at residues 185–293 (RVQK…LHFQ) and 306–411 (MTAK…DAMP). The stretch at 653-727 (LQSTQRRPEL…ERARNDESQL (75 aa)) is one Spectrin 1 repeat. The residue at position 728 (Ser-728) is a Phosphoserine. Spectrin repeat units lie at residues 748–832 (KLLN…REDH) and 845–938 (LQTQ…AIVQ). Position 823 is a phosphothreonine (Thr-823). The SH3 domain maps to 949–1006 (RGHVPLIAVCDYKQVEVTVHKGDQCQLVGPAQPSHWKVLSGSSSEAAVPSVCFLVPPP). The required for interaction with intermediate filament proteins stretch occupies residues 963–4572 (VEVTVHKGDQ…ARTAQKLRDV (3610 aa)). Ser-1055 bears the Phosphoserine mark. A Spectrin 4 repeat occupies 1323–1423 (RERVTQLLER…QKFAKQYINA (101 aa)). At Ser-1443 the chain carries Phosphoserine. Coiled-coil stretches lie at residues 1477–1697 (QYIK…ERRL) and 1729–2764 (SFAE…TTQA). The segment at 1479–2762 (IKFISETLRR…ALAHSEIATT (1284 aa)) is central fibrous rod domain. Residues 1626 to 1653 (RAEEAEAQKRQAQEEAERLRRQVQDESQ) are disordered. Ser-1729 carries the post-translational modification Phosphoserine. Lys-1733 carries the post-translational modification N6-acetyllysine. Disordered stretches follow at residues 1801–1835 (SLAQADAEKQKEEAEREARRRGKAEEQAVRQRELA), 2100–2141 (AEDT…SLAA), and 2223–2317 (RLRS…KHKK). Composition is skewed to basic and acidic residues over residues 1806–1835 (DAEKQKEEAEREARRRGKAEEQAVRQRELA), 2100–2116 (AEDTMRSKEQAELEAAR), 2124–2136 (EEQRRREAEERVQ), and 2223–2266 (RLRS…KQSA). Positions 2267–2280 (EEQAQAQAQAQAAA) are enriched in low complexity. The span at 2281–2296 (EKLRKEAEQEAARRAQ) shows a compositional bias: basic and acidic residues. The residue at position 2639 (Ser-2639) is a Phosphoserine. Lys-2644 is modified (N6-acetyllysine). Residues 2675-2728 (LREEQQRQQQQMEQEKQELMASMEEARRRQREAEEGVRRKQEELQHLEQQRQQQ) are disordered. Positions 2687-2728 (EQEKQELMASMEEARRRQREAEEGVRRKQEELQHLEQQRQQQ) are enriched in basic and acidic residues. The globular 2 stretch occupies residues 2763-4691 (QAASTKALPN…SLGGPESAVA (1929 aa)). Ser-2781 carries the phosphoserine modification. Tyr-2788 carries the post-translational modification Phosphotyrosine. Plectin repeat units lie at residues 2795 to 2832 (QKVPAQQLQEAGILSQEELQRLAQGHTTVAELTQREDV), 2833 to 2870 (YRYLKGRSSIAGLLLKPTNEKLSVYTALQRQLLSPGTA), 2871 to 2908 (LILLEAQAASGFLLDPVRNRRLTVNEAVKEGVVGPELH), 2909 to 2946 (HKLLSAERAVTGYKDPYTGEQISLFQAMKKDLIVRDHG), 2947 to 2984 (VRLLEAQIATGGIIDPVHSHRVPVDVAYKRGYFDEEMN), and 2988 to 3022 (SDPSDDTKGFFDPNTHENLTYLQLLERCVEDPETG). The residue at position 2809 (Ser-2809) is a Phosphoserine. Residue Thr-2893 is modified to Phosphothreonine. Position 3040 is a phosphotyrosine (Tyr-3040). N6-acetyllysine is present on residues Lys-3060 and Lys-3098. Plectin repeat units lie at residues 3123-3160 (ALVPAAELLDSGVISHELYQQLQRGERSVREVAEADSV), 3161-3198 (RQALRGTNVIAGVWLEEAGQKLSIYEALKKDLLQPEVA), 3199-3236 (VALLEAQAGTGHIIDPATSARLTVDEAVRAGLVGPELH), 3237-3274 (EKLLSAEKAVTGYRDPYSGQSVSLFQALKKGLIPREQG), 3275-3312 (LRLLDAQLSTGGIVDPSKSHRVPLDVAYARGYLDKETN), and 3315-3350 (LTSPRDDARVYHDPSTQEPVTYSQLQQRCRSDQLTG). The span at 3312–3326 (NRALTSPRDDARVYH) shows a compositional bias: basic and acidic residues. The segment at 3312–3338 (NRALTSPRDDARVYHDPSTQEPVTYSQ) is disordered. Residues 3328 to 3338 (PSTQEPVTYSQ) show a composition bias toward polar residues. Tyr-3369 is subject to Phosphotyrosine. N6-acetyllysine is present on Lys-3427. 5 Plectin repeats span residues 3492–3529 (RTLLQGSGCLAGIYLEDSKEKVTIYEAMRRGLLRPSTA), 3530–3567 (TLLLEAQAATGFLVDPVRNQRLYVHEAVKAGVVGPELH), 3568–3605 (EKLLSAEKAVTGYKDPYSGNTISLFQAMKKGLVLRDHA), 3606–3643 (IRLLEAQVATGGIIDPVHSHRLPVDVAYQRGYFDEEMN), and 3647–3681 (ADPSDDTKGFFDPNTHENLTYLQLLERCVEDPETG). Thr-3792 carries the phosphothreonine modification. At Tyr-3797 the chain carries Phosphotyrosine. Plectin repeat units lie at residues 3827–3864 (WRYLYGTGAVAGVYLPGSRQTLTIYQALKKGLLSAEVA), 3865–3902 (RLLLEAQAATGFLLDPVKGERLTVDEAVRKGLVGPELH), 3903–3940 (DRLLSAERAVTGYRDPYTEQTISLFQAMKKELIPAEEA), 3941–3978 (LRLLDAQLATGGIVDPRLGFHLPLEVAYQRGYLNKDTH), and 3982–4015 (SEPSEVRSYVDPSTDERLSYTQLLKRCRRDDPSG). The required for interaction with type2 keratins, DES and VIM stretch occupies residues 3954–4291 (VDPRLGFHLP…KRRVVIVDPE (338 aa)). Thr-4037 is modified (phosphothreonine). Ser-4061 bears the Phosphoserine mark. 6 Plectin repeats span residues 4070–4107 (QKFLEGTSCIAGVFVDATKERLSVYQAMKKGIIRPGTA), 4108–4145 (FELLEAQAATGYVIDPIKGLKLTVEEAVRMGIVGPEFK), 4146–4183 (DKLLSAERAVTGYKDPYSGKLISLFQAMKKGLILKDHG), 4184–4221 (IRLLEAQIATGGIIDPEESHRLPVEVAYKRGLFDEEMN), 4225–4259 (TDPSDDTKGFFDPNTEENLTYLQLMERCITDPQTG), and 4272–4312 (RKTS…HQTY). A binding to intermediate filaments region spans residues 4257-4307 (QTGLCLLPLKEKKRERKTSSKSSVRKRRVVIVDPETGKEMSVYEAYRKGLI). A disordered region spans residues 4387 to 4420 (FRSRSSSVGSSSSYPISSAGPRTQLASWSDPTEE). Phosphoserine is present on residues Ser-4389, Ser-4391, Ser-4392, Ser-4393, Ser-4396, Ser-4397, Ser-4398, and Ser-4399. Over residues 4389–4404 (SRSSSVGSSSSYPISS) the composition is skewed to low complexity. Tyr-4400 carries the phosphotyrosine modification. Phosphoserine is present on residues Ser-4403 and Ser-4413. The segment covering 4406–4416 (GPRTQLASWSD) has biased composition (polar residues). Plectin repeat units follow at residues 4415–4452 (SDPTEETGPVAGILDTETLEKVSITEAMHRNLVDNITG), 4453–4490 (QRLLEAQACTGGIIDPSTGERFPVTEAVNKGLVDKIMV), 4491–4528 (DRINLAQKAFCGFEDPRTKTKMSAAQALKKGWLYYEAG), 4529–4566 (QRFLEVQYLTGGLIEPDTPGRVSLDEALQRGTVDARTA), and 4567–4604 (QKLRDVSAYSKYLTCPKTKLKISYKDALDRSMVEEGTG). Thr-4418 carries the phosphothreonine modification. The required for efficient interaction with KRT5 and KRT14 heterodimers stretch occupies residues 4503-4572 (FEDPRTKTKM…ARTAQKLRDV (70 aa)). Thr-4546 bears the Phosphothreonine; by CDK1 mark. Phosphoserine is present on residues Ser-4614 and Ser-4620. The span at 4618 to 4678 (YYSPYSVSGS…SGYGRRYASG (61 aa)) shows a compositional bias: low complexity. The interval 4618-4691 (YYSPYSVSGS…SLGGPESAVA (74 aa)) is disordered. The residue at position 4622 (Tyr-4622) is a Phosphotyrosine. Phosphoserine is present on residues Ser-4623, Ser-4625, and Ser-4629. At Thr-4630 the chain carries Phosphothreonine. Residues 4632-4647 (GSRTGSRTGSRAGSRR) form a 4 X 4 AA tandem repeats of G-S-R-X region. Ser-4633 is subject to Phosphoserine. 2 positions are modified to omega-N-methylarginine: Arg-4634 and Arg-4647. Ser-4649 and Ser-4682 each carry phosphoserine.

The protein belongs to the plakin or cytolinker family. In terms of assembly, homodimer or homotetramer. Interacts (via actin-binding domain) with SYNE3. Interacts (via calponin-homology (CH) 1 domain) with VIM (via rod region). Interacts (via N-terminus) with DST isoform 2 (via N-terminus). Interacts with FER. Interacts with TOR1A. Interacts with ANK3. Identified in complexes that contain VIM, EZR, AHNAK, BFSP1, BFSP2, ANK2, PLEC, PRX and spectrin. As to quaternary structure, interacts with KRT14, heterodimers consisting of KRT8 and KRT18, heterodimers consisting of KRT5 and KRT14, heterodimers consisting of KRT14 and KRT15, and heterodimers consisting of KRT1 and KRT10. Interacts with DES and VIM. Phosphorylated by CDK1; regulates dissociation from intermediate filaments during mitosis. Isoform PLEC-1A is phosphorylated on Ser-21. Isoform PLEC-1A is phosphorylated on Tyr-26. In terms of tissue distribution, detected in eye lens fiber cells (at protein level). Expressed at high levels in lung, brain, small intestine, muscle, heart and skin with lower levels found in kidney, liver, uterus, spleen and salivary gland.

It is found in the cytoplasm. The protein localises to the cytoskeleton. It localises to the cell junction. The protein resides in the hemidesmosome. Its subcellular location is the cell projection. It is found in the podosome. Its function is as follows. Interlinks intermediate filaments with microtubules and microfilaments and anchors intermediate filaments to desmosomes or hemidesmosomes. May be involved not only in the cross-linking and stabilization of cytoskeletal intermediate filaments network, but also in the regulation of their dynamics. The polypeptide is Plectin (Plec) (Mus musculus (Mouse)).